Consider the following 770-residue polypeptide: Coiled-coil alpha-helical rod protein 1 (770 aa).

Coiled coils occupy residues 56 to 289 (STVT…DLQA), 334 to 420 (LRNW…RQEQ), and 476 to 669 (GLMA…RKEE). Disordered stretches follow at residues 573 to 592 (LEAARRGQQESTEEAASLRQ), 641 to 672 (LRQIQHKATQEKERNQELRRLQDEARKEEGQR), 700 to 721 (NKKCSPRSVESSSSESPAAASC), and 744 to 770 (SRDEDICVEDNQNTKKTKNPPSDPLLS). Residues 648-672 (ATQEKERNQELRRLQDEARKEEGQR) are compositionally biased toward basic and acidic residues. The span at 701–721 (KKCSPRSVESSSSESPAAASC) shows a compositional bias: low complexity.

The protein resides in the cytoplasm. Its subcellular location is the nucleus. Its function is as follows. May be a regulator of keratinocyte proliferation or differentiation. This Mus musculus (Mouse) protein is Coiled-coil alpha-helical rod protein 1 (Cchcr1).